The sequence spans 253 residues: Ubiquinone/menaquinone biosynthesis C-methyltransferase UbiE (253 aa).

Residues Thr76, Asp97, and 125–126 (NA) each bind S-adenosyl-L-methionine.

Belongs to the class I-like SAM-binding methyltransferase superfamily. MenG/UbiE family.

The catalysed reaction is a 2-demethylmenaquinol + S-adenosyl-L-methionine = a menaquinol + S-adenosyl-L-homocysteine + H(+). It catalyses the reaction a 2-methoxy-6-(all-trans-polyprenyl)benzene-1,4-diol + S-adenosyl-L-methionine = a 5-methoxy-2-methyl-3-(all-trans-polyprenyl)benzene-1,4-diol + S-adenosyl-L-homocysteine + H(+). The protein operates within quinol/quinone metabolism; menaquinone biosynthesis; menaquinol from 1,4-dihydroxy-2-naphthoate: step 2/2. It functions in the pathway cofactor biosynthesis; ubiquinone biosynthesis. Its function is as follows. Methyltransferase required for the conversion of demethylmenaquinol (DMKH2) to menaquinol (MKH2) and the conversion of 2-polyprenyl-6-methoxy-1,4-benzoquinol (DDMQH2) to 2-polyprenyl-3-methyl-6-methoxy-1,4-benzoquinol (DMQH2). This Rhodopseudomonas palustris (strain BisB5) protein is Ubiquinone/menaquinone biosynthesis C-methyltransferase UbiE.